Here is a 288-residue protein sequence, read N- to C-terminus: 4-hydroxybenzoate octaprenyltransferase (288 aa).

6 helical membrane passes run 33–53 (LWAL…AVFV), 99–119 (LFIV…TMTI), 163–183 (ESLP…AVAY), 213–233 (LIIG…GWLN), 234–254 (GLGW…GWQQ), and 268–288 (AFMN…MSYL).

This sequence belongs to the UbiA prenyltransferase family. Requires Mg(2+) as cofactor.

The protein resides in the cell inner membrane. It catalyses the reaction all-trans-octaprenyl diphosphate + 4-hydroxybenzoate = 4-hydroxy-3-(all-trans-octaprenyl)benzoate + diphosphate. It functions in the pathway cofactor biosynthesis; ubiquinone biosynthesis. Catalyzes the prenylation of para-hydroxybenzoate (PHB) with an all-trans polyprenyl group. Mediates the second step in the final reaction sequence of ubiquinone-8 (UQ-8) biosynthesis, which is the condensation of the polyisoprenoid side chain with PHB, generating the first membrane-bound Q intermediate 3-octaprenyl-4-hydroxybenzoate. This is 4-hydroxybenzoate octaprenyltransferase from Klebsiella pneumoniae subsp. pneumoniae (strain ATCC 700721 / MGH 78578).